A 131-amino-acid chain; its full sequence is Profilin-1 (131 aa).

This sequence belongs to the profilin family. In terms of assembly, occurs in many kinds of cells as a complex with monomeric actin in a 1:1 ratio. As to expression, cytoplasmic distribution in hypocotyls. In root nodules, it is found in all cells, but is more abundant in the vascular tissue as well as the endodermis.

Its subcellular location is the cytoplasm. It localises to the cytoskeleton. In terms of biological role, binds to actin and affects the structure of the cytoskeleton. At high concentrations, profilin prevents the polymerization of actin, whereas it enhances it at low concentrations. By binding to PIP2, it inhibits the formation of IP3 and DG. This chain is Profilin-1, found in Phaseolus vulgaris (Kidney bean).